A 367-amino-acid chain; its full sequence is Glutamate 5-kinase (367 aa).

Lys9 contributes to the ATP binding site. Ser49, Asp136, and Asn148 together coordinate substrate. ATP contacts are provided by residues 168–169 and 210–216; these read TD and TGGMKSK. Positions 276–350 constitute a PUA domain; sequence SGQIEIDAGA…GMQSQHIQAR (75 aa).

The protein belongs to the glutamate 5-kinase family.

The protein resides in the cytoplasm. The catalysed reaction is L-glutamate + ATP = L-glutamyl 5-phosphate + ADP. The protein operates within amino-acid biosynthesis; L-proline biosynthesis; L-glutamate 5-semialdehyde from L-glutamate: step 1/2. Its function is as follows. Catalyzes the transfer of a phosphate group to glutamate to form L-glutamate 5-phosphate. The polypeptide is Glutamate 5-kinase (Bacillus cereus (strain ATCC 10987 / NRS 248)).